A 248-amino-acid polypeptide reads, in one-letter code: Isoprenyl transferase (248 aa).

Aspartate 23 is a catalytic residue. Residue aspartate 23 coordinates Mg(2+). Substrate is bound by residues glycine 24–arginine 27, tryptophan 28, arginine 36, histidine 40, and serine 68–glutamate 70. Asparagine 71 (proton acceptor) is an active-site residue. Substrate contacts are provided by residues tryptophan 72, arginine 74, arginine 185, and arginine 191 to serine 193. Glutamate 204 is a Mg(2+) binding site.

The protein belongs to the UPP synthase family. In terms of assembly, homodimer. Mg(2+) is required as a cofactor.

Its function is as follows. Catalyzes the condensation of isopentenyl diphosphate (IPP) with allylic pyrophosphates generating different type of terpenoids. The chain is Isoprenyl transferase from Neisseria meningitidis serogroup B (strain ATCC BAA-335 / MC58).